A 349-amino-acid chain; its full sequence is NAC domain-containing protein JA2 (349 aa).

Positions leucine 14–lysine 163 constitute an NAC domain. The DNA-binding element occupies valine 111–lysine 169. The interval lysine 169 to aspartate 194 is disordered. The span at serine 177–serine 191 shows a compositional bias: low complexity.

In terms of tissue distribution, expressed in guard cells of the epidermis.

The protein localises to the nucleus. In terms of biological role, transcription factor involved in abscisic acid-mediated stomatal closure. Regulates the expression of NCED1, a gene involved in the biosynthesis of abscisic acid (ABA). Required for the stomatal closure induced by the bacterial pathogen Pseudomonas syringae pv tomato DC3000, but not for stomatal reopening. This Solanum lycopersicum (Tomato) protein is NAC domain-containing protein JA2.